We begin with the raw amino-acid sequence, 398 residues long: Acetylornithine aminotransferase (398 aa).

Residues 105–106 (GA) and Phe138 each bind pyridoxal 5'-phosphate. Arg141 is a N(2)-acetyl-L-ornithine binding site. Residue 223-226 (DEVQ) participates in pyridoxal 5'-phosphate binding. Lys252 is subject to N6-(pyridoxal phosphate)lysine. Thr280 serves as a coordination point for N(2)-acetyl-L-ornithine. Pyridoxal 5'-phosphate is bound at residue Thr281.

This sequence belongs to the class-III pyridoxal-phosphate-dependent aminotransferase family. ArgD subfamily. As to quaternary structure, homodimer. Requires pyridoxal 5'-phosphate as cofactor.

The protein localises to the cytoplasm. The enzyme catalyses N(2)-acetyl-L-ornithine + 2-oxoglutarate = N-acetyl-L-glutamate 5-semialdehyde + L-glutamate. It functions in the pathway amino-acid biosynthesis; L-arginine biosynthesis; N(2)-acetyl-L-ornithine from L-glutamate: step 4/4. In Methanocaldococcus jannaschii (strain ATCC 43067 / DSM 2661 / JAL-1 / JCM 10045 / NBRC 100440) (Methanococcus jannaschii), this protein is Acetylornithine aminotransferase.